We begin with the raw amino-acid sequence, 327 residues long: RING-H2 finger protein ATL34 (327 aa).

The first 26 residues, 1–26 (MTIGKSPILLHHHVIFLLLLVLQVSG), serve as a signal peptide directing secretion. Residues 47–67 (AVIIAMLMFTLLFSMLACCVC) form a helical membrane-spanning segment. The segment at 128-170 (CAICLNEFEDEETLRLMPPCSHAFHASCIDVWLSSRSTCPVCR) adopts an RING-type; atypical zinc-finger fold. The disordered stretch occupies residues 280–327 (LSHMKTLPQARSSREGYRSGSVGSERRGKGKEKEFGEGSFDRLKAEMV). Residues 303 to 327 (SERRGKGKEKEFGEGSFDRLKAEMV) show a composition bias toward basic and acidic residues.

The protein belongs to the RING-type zinc finger family. ATL subfamily.

Its subcellular location is the membrane. The enzyme catalyses S-ubiquitinyl-[E2 ubiquitin-conjugating enzyme]-L-cysteine + [acceptor protein]-L-lysine = [E2 ubiquitin-conjugating enzyme]-L-cysteine + N(6)-ubiquitinyl-[acceptor protein]-L-lysine.. It functions in the pathway protein modification; protein ubiquitination. This Arabidopsis thaliana (Mouse-ear cress) protein is RING-H2 finger protein ATL34 (ATL34).